Here is a 721-residue protein sequence, read N- to C-terminus: Polyribonucleotide nucleotidyltransferase (721 aa).

Mg(2+) is bound by residues aspartate 490 and aspartate 496. The KH domain occupies proline 557–lysine 623. The S1 motif domain maps to glycine 625 to proline 693. The interval proline 693–aspartate 721 is disordered.

This sequence belongs to the polyribonucleotide nucleotidyltransferase family. Mg(2+) serves as cofactor.

The protein resides in the cytoplasm. The catalysed reaction is RNA(n+1) + phosphate = RNA(n) + a ribonucleoside 5'-diphosphate. In terms of biological role, involved in mRNA degradation. Catalyzes the phosphorolysis of single-stranded polyribonucleotides processively in the 3'- to 5'-direction. In Deinococcus deserti (strain DSM 17065 / CIP 109153 / LMG 22923 / VCD115), this protein is Polyribonucleotide nucleotidyltransferase.